The following is a 674-amino-acid chain: MTDQEEAKLILDKLNEKIRYHDLLYYTQDSPEISDAEYDDLCHQRSIILEKFPSLNSYYQDYIGGDPDSRFSKVKHNERMLSLDNAFNKQDVEKFMVRTRKLLDMKENESLCFSCELKIDGLSFSIIYKNGKLFQASTRGNGYFGENITNNVKTIENLPHTIQNAPDFLEVRGEVYIDRNDFIQLNNEGKNFANPRNAAAGSIRQLDPTITAQRKLKYCMYTIVNSNCLTQTESLNLLNSWGFCTNEHTISTDNFEEAINFYNKMYNNRSNISYDIDGIIYKINNIKLQHILGTTSKSPRWAIAYKFPAIEGKTKLNKISIQVGRTGVLTPIAELAPINIGGVVITRASLHNKSEIERKDIREGDYVIVKRAGDVIPQVVDVDKSLRTVELAEFNFPTACPACGSTVYQAQQEVSIYCMGGLFCHNQILEKIRHFVSKDAFNIIGLGKKQLLFFYEYGLITNIIDIFTLEEKINNKNIQLSSFNGWGEKSINNLLSAINNSKVINLENFIFSLGIRFVGKHIAKILANHFISYKNWYTEMLKLAQDVNYTINIQQVGLKTINSLRTFFIEQHNLNMINNLVEHLTIIDAQSNSYVSLIHGKTIVFTGELSSMSRSEAKLKSETAGAKVSSSLSKNTDFLIIGNNPGSKYKKAQSLNIQILSEDIWLQYIQPNKV.

NAD(+) contacts are provided by residues 35–39 (DAEYD), 82–83 (SL), and Glu-116. Lys-118 acts as the N6-AMP-lysine intermediate in catalysis. NAD(+)-binding residues include Arg-139, Glu-174, Lys-282, and Lys-306. Cys-400, Cys-403, Cys-418, and Cys-424 together coordinate Zn(2+). In terms of domain architecture, BRCT spans 593 to 674 (SYVSLIHGKT…WLQYIQPNKV (82 aa)).

This sequence belongs to the NAD-dependent DNA ligase family. LigA subfamily. Requires Mg(2+) as cofactor. Mn(2+) serves as cofactor.

It carries out the reaction NAD(+) + (deoxyribonucleotide)n-3'-hydroxyl + 5'-phospho-(deoxyribonucleotide)m = (deoxyribonucleotide)n+m + AMP + beta-nicotinamide D-nucleotide.. DNA ligase that catalyzes the formation of phosphodiester linkages between 5'-phosphoryl and 3'-hydroxyl groups in double-stranded DNA using NAD as a coenzyme and as the energy source for the reaction. It is essential for DNA replication and repair of damaged DNA. This Ehrlichia ruminantium (strain Welgevonden) protein is DNA ligase.